Consider the following 232-residue polypeptide: Ubiquinone biosynthesis O-methyltransferase (232 aa).

S-adenosyl-L-methionine is bound by residues Arg36, Gly55, Asp76, and Leu120.

This sequence belongs to the methyltransferase superfamily. UbiG/COQ3 family.

It carries out the reaction a 3-demethylubiquinol + S-adenosyl-L-methionine = a ubiquinol + S-adenosyl-L-homocysteine + H(+). The enzyme catalyses a 3-(all-trans-polyprenyl)benzene-1,2-diol + S-adenosyl-L-methionine = a 2-methoxy-6-(all-trans-polyprenyl)phenol + S-adenosyl-L-homocysteine + H(+). The protein operates within cofactor biosynthesis; ubiquinone biosynthesis. Its function is as follows. O-methyltransferase that catalyzes the 2 O-methylation steps in the ubiquinone biosynthetic pathway. The sequence is that of Ubiquinone biosynthesis O-methyltransferase from Azotobacter vinelandii (strain DJ / ATCC BAA-1303).